The primary structure comprises 318 residues: Transaldolase (318 aa).

The active-site Schiff-base intermediate with substrate is the K132.

The protein belongs to the transaldolase family. Type 1 subfamily. Homodimer.

Its subcellular location is the cytoplasm. It carries out the reaction D-sedoheptulose 7-phosphate + D-glyceraldehyde 3-phosphate = D-erythrose 4-phosphate + beta-D-fructose 6-phosphate. It participates in carbohydrate degradation; pentose phosphate pathway; D-glyceraldehyde 3-phosphate and beta-D-fructose 6-phosphate from D-ribose 5-phosphate and D-xylulose 5-phosphate (non-oxidative stage): step 2/3. In terms of biological role, transaldolase is important for the balance of metabolites in the pentose-phosphate pathway. The protein is Transaldolase of Shewanella pealeana (strain ATCC 700345 / ANG-SQ1).